The chain runs to 518 residues: Putative cysteine ligase BshC (518 aa).

The stretch at 404 to 474 forms a coiled coil; sequence AAASAERLAA…RARQLTRLKR (71 aa).

Belongs to the BshC family.

This chain is Putative cysteine ligase BshC, found in Deinococcus geothermalis (strain DSM 11300 / CIP 105573 / AG-3a).